A 166-amino-acid polypeptide reads, in one-letter code: Large ribosomal subunit protein uL10 (166 aa).

It belongs to the universal ribosomal protein uL10 family. In terms of assembly, part of the ribosomal stalk of the 50S ribosomal subunit. The N-terminus interacts with L11 and the large rRNA to form the base of the stalk. The C-terminus forms an elongated spine to which L12 dimers bind in a sequential fashion forming a multimeric L10(L12)X complex.

Its function is as follows. Forms part of the ribosomal stalk, playing a central role in the interaction of the ribosome with GTP-bound translation factors. This is Large ribosomal subunit protein uL10 from Tropheryma whipplei (strain TW08/27) (Whipple's bacillus).